A 132-amino-acid chain; its full sequence is Large ribosomal subunit protein uL22 (132 aa).

This sequence belongs to the universal ribosomal protein uL22 family. As to quaternary structure, part of the 50S ribosomal subunit.

This protein binds specifically to 23S rRNA; its binding is stimulated by other ribosomal proteins, e.g. L4, L17, and L20. It is important during the early stages of 50S assembly. It makes multiple contacts with different domains of the 23S rRNA in the assembled 50S subunit and ribosome. Functionally, the globular domain of the protein is located near the polypeptide exit tunnel on the outside of the subunit, while an extended beta-hairpin is found that lines the wall of the exit tunnel in the center of the 70S ribosome. This Rhodospirillum centenum (strain ATCC 51521 / SW) protein is Large ribosomal subunit protein uL22.